Reading from the N-terminus, the 547-residue chain is Cytochrome P450 monooxygenase cpsD (547 aa).

A helical transmembrane segment spans residues L18–L38. Position 476 (C476) interacts with heme. Residues R528–E547 form a disordered region. Residues R534–E547 are compositionally biased toward basic and acidic residues.

It belongs to the cytochrome P450 family. Heme is required as a cofactor.

The protein resides in the membrane. The enzyme catalyses campesine B + campesine C + reduced [NADPH--hemoprotein reductase] + O2 = campesine D + oxidized [NADPH--hemoprotein reductase] + 2 H2O + 2 H(+). It carries out the reaction 2 campesine B + reduced [NADPH--hemoprotein reductase] + O2 = campesine F + oxidized [NADPH--hemoprotein reductase] + 2 H2O + H(+). The catalysed reaction is campesine C + campesine A + reduced [NADPH--hemoprotein reductase] + O2 = campesine E + oxidized [NADPH--hemoprotein reductase] + 2 H2O + 2 H(+). It functions in the pathway alkaloid biosynthesis. In terms of biological role, cytochrome P450 monooxygenase; part of the gene cluster that mediates the biosynthesis of campesine G, a dimeric indole piperazine alkaloid that shows good insecticidal activity Galleria mellonella. Within the pathway, cpsD acts as a dimerase that simultaneously catalyzes one C-C bond (C3-C3') and two C-N bonds (C2-N16' and C2'-N16) coupling reactions between campesines B and C to produce a heterodimer with unexpected 6/5/6/6/6/6/5/6 eight-ring scaffold called campesine D. CpsD is also able to catalyze oxidative heterocoupling od campesines A with B to produce campesine F and campesines A with C to produce campesine E. The non-canonical non-ribosomal peptide synthetase cpsA catalyzes the first steps of the pathway by producing L-tryptophanal and L-valinal from their respective amino-acids. These products condensate spontaneously to form trypyl-valyl pyrazine also known as didehydrocampesine A. The NmrA-like family domain-containing oxidoreductase cpsB is the next enzyme in cps pathway and reduces the unstable didehydrocampesine A to campesine A. The methyltransferase cpsF and the acetyltransferase cpsE both recognize N13 of piperazine ring to carry out methylation and acetylation of campesine A to produce campesine C and B, respectively. The cytochrome P450 monooxygenase cpsD then acts as a dimerase that catalyzes oxidative heterocoupling between campesine B and C to produce heterodimers with unexpected 6/5/6/6/6/6/5/6 eight-ring scaffold called campesine D. Finally,the cytochrome P450 monooxygenase cpsC is a regioselective dehydrogenase that catalyzes dehydrogenation reaction towards C2-N1 to produce campesine G. The sequence is that of Cytochrome P450 monooxygenase cpsD from Aspergillus campestris (strain IBT 28561).